Reading from the N-terminus, the 250-residue chain is Histone H1.1 (250 aa).

Positions Met-1–Ser-11 are enriched in polar residues. Disordered stretches follow at residues Met-1–Val-52 and Gln-104–Lys-250. An H15 domain is found at Ser-44–Ala-118. Over residues Lys-122–Lys-133 the composition is skewed to basic and acidic residues. Positions Ala-140–Ala-161 are enriched in low complexity. The span at Lys-174–Lys-191 shows a compositional bias: basic and acidic residues. Residues Thr-192–Lys-234 show a composition bias toward low complexity. The segment covering Thr-235–Lys-250 has biased composition (basic residues).

It belongs to the histone H1/H5 family.

The protein localises to the nucleus. It localises to the chromosome. Its function is as follows. Histones H1 are necessary for the condensation of nucleosome chains into higher-order structures. The sequence is that of Histone H1.1 (His1.1) from Drosophila virilis (Fruit fly).